The following is a 229-amino-acid chain: Ribonuclease HII (229 aa).

The 190-residue stretch at 34–223 (WPVAGADEAG…LRKVEDGPQM (190 aa)) folds into the RNase H type-2 domain. A divalent metal cation contacts are provided by Asp-40, Glu-41, and Asp-131.

It belongs to the RNase HII family. Mn(2+) serves as cofactor. Mg(2+) is required as a cofactor.

Its subcellular location is the cytoplasm. It catalyses the reaction Endonucleolytic cleavage to 5'-phosphomonoester.. In terms of biological role, endonuclease that specifically degrades the RNA of RNA-DNA hybrids. The chain is Ribonuclease HII from Rhizobium leguminosarum bv. trifolii (strain WSM2304).